Here is a 548-residue protein sequence, read N- to C-terminus: Hydroxylamine reductase (548 aa).

The [4Fe-4S] cluster site is built by C3, C6, C15, and C21. Positions 240, 264, 308, 402, 430, 455, 490, and 492 each coordinate hybrid [4Fe-2O-2S] cluster. C402 carries the cysteine persulfide modification.

It belongs to the HCP family. It depends on [4Fe-4S] cluster as a cofactor. The cofactor is hybrid [4Fe-2O-2S] cluster.

It is found in the cytoplasm. It carries out the reaction A + NH4(+) + H2O = hydroxylamine + AH2 + H(+). Catalyzes the reduction of hydroxylamine to form NH(3) and H(2)O. The polypeptide is Hydroxylamine reductase (Parabacteroides distasonis (strain ATCC 8503 / DSM 20701 / CIP 104284 / JCM 5825 / NCTC 11152)).